The following is a 599-amino-acid chain: Proteasome-associated ATPase (599 aa).

The tract at residues 1-22 is disordered; it reads MPHGHPGSQPDEGGELSNGSSS. The stretch at 21–97 forms a coiled coil; it reads SSGELTAQIR…LREEVDRLAQ (77 aa). 286-291 contributes to the ATP binding site; sequence GCGKTL. A docks into pockets in the proteasome alpha-ring region spans residues 598-599; the sequence is YL.

This sequence belongs to the AAA ATPase family. In terms of assembly, homohexamer. Assembles into a hexameric ring structure that caps the 20S proteasome core. Strongly interacts with the prokaryotic ubiquitin-like protein Pup through a hydrophobic interface; the interacting region of ARC lies in its N-terminal coiled-coil domain. There is one Pup binding site per ARC hexamer ring. Upon ATP-binding, the C-terminus of ARC interacts with the alpha-rings of the proteasome core, possibly by binding to the intersubunit pockets.

The protein operates within protein degradation; proteasomal Pup-dependent pathway. Functionally, ATPase which is responsible for recognizing, binding, unfolding and translocation of pupylated proteins into the bacterial 20S proteasome core particle. May be essential for opening the gate of the 20S proteasome via an interaction with its C-terminus, thereby allowing substrate entry and access to the site of proteolysis. Thus, the C-termini of the proteasomal ATPase may function like a 'key in a lock' to induce gate opening and therefore regulate proteolysis. This Actinosynnema mirum (strain ATCC 29888 / DSM 43827 / JCM 3225 / NBRC 14064 / NCIMB 13271 / NRRL B-12336 / IMRU 3971 / 101) protein is Proteasome-associated ATPase.